The sequence spans 445 residues: GTPase Der (445 aa).

2 consecutive EngA-type G domains span residues 3 to 167 (PVIA…YAGQ) and 180 to 353 (IKIA…AAAM). GTP is bound by residues 9–16 (GRPNVGKS), 56–60 (DTGGF), 119–122 (NKAE), 186–193 (GRPNVGKS), 233–237 (DTAGL), and 298–301 (NKWD). The KH-like domain occupies 354 to 438 (AKLPTPKLTR…PLRIEFRSSN (85 aa)).

This sequence belongs to the TRAFAC class TrmE-Era-EngA-EngB-Septin-like GTPase superfamily. EngA (Der) GTPase family. In terms of assembly, associates with the 50S ribosomal subunit.

GTPase that plays an essential role in the late steps of ribosome biogenesis. The polypeptide is GTPase Der (Burkholderia ambifaria (strain MC40-6)).